A 231-amino-acid polypeptide reads, in one-letter code: ATP phosphoribosyltransferase (231 aa).

This sequence belongs to the ATP phosphoribosyltransferase family. Short subfamily. As to quaternary structure, heteromultimer composed of HisG and HisZ subunits.

It is found in the cytoplasm. The catalysed reaction is 1-(5-phospho-beta-D-ribosyl)-ATP + diphosphate = 5-phospho-alpha-D-ribose 1-diphosphate + ATP. Its pathway is amino-acid biosynthesis; L-histidine biosynthesis; L-histidine from 5-phospho-alpha-D-ribose 1-diphosphate: step 1/9. Catalyzes the condensation of ATP and 5-phosphoribose 1-diphosphate to form N'-(5'-phosphoribosyl)-ATP (PR-ATP). Has a crucial role in the pathway because the rate of histidine biosynthesis seems to be controlled primarily by regulation of HisG enzymatic activity. This Brucella ovis (strain ATCC 25840 / 63/290 / NCTC 10512) protein is ATP phosphoribosyltransferase.